The chain runs to 495 residues: Probable biotin-dependent acyl-coenzyme A carboxylase beta3 subunit (495 aa).

Residues 1 to 236 enclose the CoA carboxyltransferase N-terminal domain; that stretch reads MSRITTDQLR…PLPAPQTPAP (236 aa). Residues 242–470 enclose the CoA carboxyltransferase C-terminal domain; the sequence is TWDSVVASRR…SNAIAAEVHA (229 aa).

Belongs to the AccD/PCCB family. The biotin-dependent acyl-CoA carboxylase complex is composed of an AccA protein, which contains the biotin carboxylase (BC) and biotin carboxyl carrier protein (BCCP) domains, and an AccD protein, which contains the carboxyl transferase (CT) domain.

Its function is as follows. Component of a biotin-dependent acyl-CoA carboxylase complex. This subunit transfers the CO2 from carboxybiotin to the CoA ester substrate. The polypeptide is Probable biotin-dependent acyl-coenzyme A carboxylase beta3 subunit (accD3) (Mycobacterium bovis (strain ATCC BAA-935 / AF2122/97)).